Consider the following 158-residue polypeptide: Cytosine deaminase (158 aa).

The CMP/dCMP-type deaminase domain maps to 9–129 (KWDQKGMDIA…KYLQTRGHEV (121 aa)). Asn-51 contacts substrate. His-62 lines the Zn(2+) pocket. The active-site Proton donor is the Glu-64. 2 residues coordinate Zn(2+): Cys-91 and Cys-94. Residue Asp-155 coordinates substrate.

The protein belongs to the cytidine and deoxycytidylate deaminase family. In terms of assembly, homodimer. Zn(2+) serves as cofactor.

The protein resides in the cytoplasm. It is found in the nucleus. The enzyme catalyses cytosine + H2O + H(+) = uracil + NH4(+). It functions in the pathway pyrimidine metabolism; UMP biosynthesis via salvage pathway; uracil from cytosine: step 1/1. In terms of biological role, catalyzes the hydrolytic deamination of cytosine to uracil or 5-methylcytosine to thymine. Is involved in the pyrimidine salvage pathway, which allows the cell to utilize cytosine for pyrimidine nucleotide synthesis. This is Cytosine deaminase from Saccharomyces cerevisiae (strain ATCC 204508 / S288c) (Baker's yeast).